The sequence spans 462 residues: DEK domain-containing chromatin-associated protein 1 (462 aa).

Disordered stretches follow at residues 18-91 and 212-390; these read AVTE…TQGR and KETK…RKEL. Residues 20–32 are compositionally biased toward basic and acidic residues; the sequence is TEKDTETKKKDEV. Positions 33 to 46 are enriched in acidic residues; sequence EKDEAMEEKGEEID. Residues 77-91 show a composition bias toward polar residues; sequence PRSSGNKPLSITQGR. Residues 267–276 are compositionally biased toward acidic residues; it reads NGEDDVAPEE. 3 stretches are compositionally biased toward basic and acidic residues: residues 277-303, 312-322, and 347-360; these read ENNK…TDKK, EKPAAEEEKSI, and QKVD…EKGK. Residues 344–351 carry the Nuclear localization signal motif; the sequence is SKKQKVDK. Residues 384 to 439 enclose the DEK-C domain; sequence EPTRKELHVVVTKILKEVDFNTATLSDILRKLGSHFGIDLMHRKAEVKDIITDAIN. 2 DNA-binding regions span residues 402–416 and 431–435; these read DFNT…RKLG and KDIIT. The interval 438 to 462 is disordered; that stretch reads INEMSDDDDEKEEDTEDEGEKEGKD. A compositionally biased stretch (acidic residues) spans 441-462; sequence MSDDDDEKEEDTEDEGEKEGKD.

In terms of assembly, found in a mRNA splicing-dependent exon junction complex (EJC). Binds specifically histones H3 and H4.

It is found in the nucleus. The protein resides in the nucleolus. Its function is as follows. Chromatin-associated protein which contributes to the modulation of chromatin structure (such as super-helical structure of DNA) and function. Binds to chromatin of protein-coding genes throughout the genome to regulate nucleosome occupancy and chromatin accessibility, and to modulate the expression of target genes. The chain is DEK domain-containing chromatin-associated protein 1 from Arabidopsis thaliana (Mouse-ear cress).